The primary structure comprises 466 residues: Asparagine--tRNA ligase (466 aa).

The protein belongs to the class-II aminoacyl-tRNA synthetase family. In terms of assembly, homodimer.

The protein resides in the cytoplasm. It catalyses the reaction tRNA(Asn) + L-asparagine + ATP = L-asparaginyl-tRNA(Asn) + AMP + diphosphate + H(+). The polypeptide is Asparagine--tRNA ligase (Colwellia psychrerythraea (strain 34H / ATCC BAA-681) (Vibrio psychroerythus)).